Consider the following 158-residue polypeptide: Transcription antitermination protein NusB (158 aa).

Residues 1–12 show a composition bias toward basic and acidic residues; that stretch reads MKRVEKRAEKQG. Residues 1 to 20 are disordered; it reads MKRVEKRAEKQGRGTARKSR.

The protein belongs to the NusB family.

In terms of biological role, involved in transcription antitermination. Required for transcription of ribosomal RNA (rRNA) genes. Binds specifically to the boxA antiterminator sequence of the ribosomal RNA (rrn) operons. This chain is Transcription antitermination protein NusB, found in Nitrosospira multiformis (strain ATCC 25196 / NCIMB 11849 / C 71).